The chain runs to 73 residues: uncharacterized protein (73 aa).

N-glycosylated.

This is an uncharacterized protein from Saccharomyces cerevisiae (strain ATCC 204508 / S288c) (Baker's yeast).